We begin with the raw amino-acid sequence, 216 residues long: Large ribosomal subunit protein uL3 (216 aa).

Residues 137 to 158 form a disordered region; sequence GASHGAHKNHRKPGSIGGASTP.

Belongs to the universal ribosomal protein uL3 family. Part of the 50S ribosomal subunit. Forms a cluster with proteins L14 and L19.

In terms of biological role, one of the primary rRNA binding proteins, it binds directly near the 3'-end of the 23S rRNA, where it nucleates assembly of the 50S subunit. This is Large ribosomal subunit protein uL3 from Pseudarthrobacter chlorophenolicus (strain ATCC 700700 / DSM 12829 / CIP 107037 / JCM 12360 / KCTC 9906 / NCIMB 13794 / A6) (Arthrobacter chlorophenolicus).